The sequence spans 146 residues: Anti-sigma F factor (146 aa).

The protein belongs to the anti-sigma-factor family.

The catalysed reaction is L-seryl-[protein] + ATP = O-phospho-L-seryl-[protein] + ADP + H(+). It carries out the reaction L-threonyl-[protein] + ATP = O-phospho-L-threonyl-[protein] + ADP + H(+). Its function is as follows. Binds to sigma F and blocks its ability to form an RNA polymerase holoenzyme (E-sigma F). Phosphorylates SpoIIAA on a serine residue. This phosphorylation may enable SpoIIAA to act as an anti-anti-sigma factor that counteracts SpoIIAB and thus releases sigma F from inhibition. This Geobacillus sp. (strain WCH70) protein is Anti-sigma F factor.